The sequence spans 321 residues: MAHATSSAYEVKITLPGNLTRDEEDRLRCLTGTILMAPSLRRCLFLHDVDRNSYYVHGSEPDYATSLAAYRRRFPLLVTAVGRQELSAVSLSIGCPKGLNFRNTGPFQLLNGSNVSLIPPIGGRWRVELLSCGSVIEPAMTIPTEVGSELLGKILAGMTYEFCARNQIPADRPAEVYRVACDNKALDLTQAIRGGDSDLQDTMKTLFASVLFAMNEGVLQVMTLMPALLAGGNTNPFLNALLQMQSATRLSAQIFNPPTLPVHDPTGGARRYNVFDAFASWLTMSHRLGELFHMKPALKVVMFYSDVSAIDEGQTANAIVP.

This sequence belongs to the herpesviridae TRX2 protein family. As to quaternary structure, interacts with TRX1 and major capisd protein/MCP.

Its subcellular location is the virion. The protein localises to the host nucleus. Functionally, structural component of the T=16 icosahedral capsid. The capsid is composed of pentamers and hexamers of major capsid protein/MCP, which are linked together by heterotrimers called triplexes. These triplexes are formed by a single molecule of triplex protein 1/TRX1 and two copies of triplex protein 2/TRX2. Additionally, TRX1 is required for efficient transport of TRX2 to the nucleus, which is the site of capsid assembly. The sequence is that of Triplex capsid protein 2 from Amazona oratrix (yellow-headed parrot).